We begin with the raw amino-acid sequence, 219 residues long: PKHD-type hydroxylase Plav_0037 (219 aa).

Positions 78-172 constitute a Fe2OG dioxygenase domain; it reads NFIRILLSRY…RRAAVGWIRS (95 aa). The Fe cation site is built by histidine 96, aspartate 98, and histidine 153. Arginine 163 is a binding site for 2-oxoglutarate.

The cofactor is Fe(2+). L-ascorbate is required as a cofactor.

This chain is PKHD-type hydroxylase Plav_0037, found in Parvibaculum lavamentivorans (strain DS-1 / DSM 13023 / NCIMB 13966).